Consider the following 242-residue polypeptide: Biosynthetic peptidoglycan transglycosylase (242 aa).

A helical membrane pass occupies residues 19 to 39; sequence LMVVLAVFWGGGIALFSVAPV.

This sequence belongs to the glycosyltransferase 51 family.

The protein localises to the cell inner membrane. It catalyses the reaction [GlcNAc-(1-&gt;4)-Mur2Ac(oyl-L-Ala-gamma-D-Glu-L-Lys-D-Ala-D-Ala)](n)-di-trans,octa-cis-undecaprenyl diphosphate + beta-D-GlcNAc-(1-&gt;4)-Mur2Ac(oyl-L-Ala-gamma-D-Glu-L-Lys-D-Ala-D-Ala)-di-trans,octa-cis-undecaprenyl diphosphate = [GlcNAc-(1-&gt;4)-Mur2Ac(oyl-L-Ala-gamma-D-Glu-L-Lys-D-Ala-D-Ala)](n+1)-di-trans,octa-cis-undecaprenyl diphosphate + di-trans,octa-cis-undecaprenyl diphosphate + H(+). The protein operates within cell wall biogenesis; peptidoglycan biosynthesis. Its function is as follows. Peptidoglycan polymerase that catalyzes glycan chain elongation from lipid-linked precursors. This Escherichia coli O17:K52:H18 (strain UMN026 / ExPEC) protein is Biosynthetic peptidoglycan transglycosylase.